The primary structure comprises 462 residues: Cytokine-like nuclear factor N-PAC (462 aa).

In terms of domain architecture, PWWP spans 8–66 (IGDLVWGKLGRYPPWPGKVVSPPKDLKKPRGKKCFFVKFFGTEDHAWIKVEQLKPYHPH). Basic and acidic residues predominate over residues 91 to 111 (KKAKGKDQSHSDDKSKSDKGR). Residues 91–139 (KKAKGKDQSHSDDKSKSDKGRKAAKPMKIIEEDDEDAFKGGSSDKPASS) are disordered. A dehydrogenase domain region spans residues 169–462 (GSITPTDKRI…MSAVYRAYIH (294 aa)). Residues 179–193 (GFLGLGLMGSGVVSN), threonine 270, and lysine 414 contribute to the NAD(+) site.

It belongs to the HIBADH-related family. NP60 subfamily. Homotetramere. Binds to mononucleosomes.

It localises to the nucleus. It is found in the chromosome. Functionally, may have oxidoreductase activity. Regulates p38 MAP kinase activity by mediating stress activation of mapk14 and specifically regulating mapk14 signaling. In terms of biological role, cytokine-like nuclear factor with chromatin gene reader activity involved in chromatin modification and regulation of gene expression. Acts as a nucleosome-destabilizing factor that is recruited to genes during transcriptional activation. Recognizes and binds histone H3 without a preference for specific epigenetic markers and also binds DNA. Interacts with KDM1B and promotes its histone demethylase activity by facilitating the capture of H3 tails, they form a multifunctional enzyme complex that modifies transcribed chromatin and facilitates Pol II transcription through nucleosomes. The polypeptide is Cytokine-like nuclear factor N-PAC (glyr1) (Danio rerio (Zebrafish)).